Here is a 471-residue protein sequence, read N- to C-terminus: POU domain protein 2 (471 aa).

The span at 1-18 (CGKSYEEEEEEEDDELEA) shows a compositional bias: acidic residues. 2 disordered regions span residues 1-32 (CGKS…SARQ) and 149-238 (DQQL…PKPL). A compositionally biased stretch (low complexity) spans 165-180 (STPLSKSPLRSPSLSP). Polar residues predominate over residues 186-196 (EPQQAQRTPPN). Low complexity predominate over residues 197 to 230 (SLAAAGLGLSSAVLTPNTPSMQQQQQQTMTSTTN). A POU-specific domain is found at 257-331 (EETTDLEELE…LLQKWLEDAD (75 aa)). The homeobox DNA-binding region spans 362–421 (RRKKRTSIETTIRGALEQAFVLNCKPTSEEINQLSERLHMDKEVVRVWFCNRRQKEKRIN).

Belongs to the POU transcription factor family. Class-2 subfamily.

Its subcellular location is the nucleus. In terms of biological role, DNA-binding regulatory protein implicated in early development. Involved in neuronal cell fate decision. May act as an octamer-dependent activator of transcription. The protein is POU domain protein 2 (pdm2) of Drosophila virilis (Fruit fly).